Reading from the N-terminus, the 120-residue chain is A-type ATP synthase subunit F (120 aa).

It belongs to the V-ATPase F subunit family. As to quaternary structure, has multiple subunits with at least A(3), B(3), C, D, E, F, H, I and proteolipid K(x).

Its subcellular location is the cell membrane. In terms of biological role, component of the A-type ATP synthase that produces ATP from ADP in the presence of a proton gradient across the membrane. The polypeptide is A-type ATP synthase subunit F (Halobacterium salinarum (strain ATCC 29341 / DSM 671 / R1)).